The following is a 309-amino-acid chain: tRNA uridine(34) hydroxylase (309 aa).

Positions 137–232 constitute a Rhodanese domain; it reads RGDEVVFFDG…YGEKYGDKGL (96 aa). Cys192 serves as the catalytic Cysteine persulfide intermediate.

It belongs to the TrhO family.

The catalysed reaction is uridine(34) in tRNA + AH2 + O2 = 5-hydroxyuridine(34) in tRNA + A + H2O. Its function is as follows. Catalyzes oxygen-dependent 5-hydroxyuridine (ho5U) modification at position 34 in tRNAs. This Corynebacterium jeikeium (strain K411) protein is tRNA uridine(34) hydroxylase.